A 192-amino-acid polypeptide reads, in one-letter code: Crossover junction endodeoxyribonuclease RuvC (192 aa).

Catalysis depends on residues aspartate 7, glutamate 67, and aspartate 140. Residues aspartate 7, glutamate 67, and aspartate 140 each coordinate Mg(2+). Residues 158 to 192 form a disordered region; the sequence is RQSGVPPRTNSRRKSGTGGSWEQFVRQSPNVVVRS. Positions 182–192 are enriched in polar residues; the sequence is VRQSPNVVVRS.

This sequence belongs to the RuvC family. Homodimer which binds Holliday junction (HJ) DNA. The HJ becomes 2-fold symmetrical on binding to RuvC with unstacked arms; it has a different conformation from HJ DNA in complex with RuvA. In the full resolvosome a probable DNA-RuvA(4)-RuvB(12)-RuvC(2) complex forms which resolves the HJ. Mg(2+) is required as a cofactor.

It is found in the cytoplasm. It catalyses the reaction Endonucleolytic cleavage at a junction such as a reciprocal single-stranded crossover between two homologous DNA duplexes (Holliday junction).. The RuvA-RuvB-RuvC complex processes Holliday junction (HJ) DNA during genetic recombination and DNA repair. Endonuclease that resolves HJ intermediates. Cleaves cruciform DNA by making single-stranded nicks across the HJ at symmetrical positions within the homologous arms, yielding a 5'-phosphate and a 3'-hydroxyl group; requires a central core of homology in the junction. The consensus cleavage sequence is 5'-(A/T)TT(C/G)-3'. Cleavage occurs on the 3'-side of the TT dinucleotide at the point of strand exchange. HJ branch migration catalyzed by RuvA-RuvB allows RuvC to scan DNA until it finds its consensus sequence, where it cleaves and resolves the cruciform DNA. This is Crossover junction endodeoxyribonuclease RuvC from Chlorobium chlorochromatii (strain CaD3).